The following is a 394-amino-acid chain: Acetyl-CoA acetyltransferase (394 aa).

Cysteine 89 serves as the catalytic Acyl-thioester intermediate. Residues histidine 350 and cysteine 380 each act as proton acceptor in the active site.

It belongs to the thiolase-like superfamily. Thiolase family. As to quaternary structure, homotetramer.

It is found in the cytoplasm. The catalysed reaction is 2 acetyl-CoA = acetoacetyl-CoA + CoA. The protein operates within biopolymer metabolism; poly-(R)-3-hydroxybutanoate biosynthesis. It participates in metabolic intermediate biosynthesis; (R)-mevalonate biosynthesis; (R)-mevalonate from acetyl-CoA: step 1/3. In Thiocystis violacea, this protein is Acetyl-CoA acetyltransferase.